The chain runs to 428 residues: Enolase (428 aa).

Gln163 lines the (2R)-2-phosphoglycerate pocket. Glu205 functions as the Proton donor in the catalytic mechanism. Residues Asp242, Glu285, and Asp312 each contribute to the Mg(2+) site. (2R)-2-phosphoglycerate contacts are provided by Lys337, Arg366, Ser367, and Lys388. Residue Lys337 is the Proton acceptor of the active site.

It belongs to the enolase family. Mg(2+) is required as a cofactor.

The protein resides in the cytoplasm. The protein localises to the secreted. It is found in the cell surface. The enzyme catalyses (2R)-2-phosphoglycerate = phosphoenolpyruvate + H2O. Its pathway is carbohydrate degradation; glycolysis; pyruvate from D-glyceraldehyde 3-phosphate: step 4/5. Its function is as follows. Catalyzes the reversible conversion of 2-phosphoglycerate (2-PG) into phosphoenolpyruvate (PEP). It is essential for the degradation of carbohydrates via glycolysis. The polypeptide is Enolase (Novosphingobium aromaticivorans (strain ATCC 700278 / DSM 12444 / CCUG 56034 / CIP 105152 / NBRC 16084 / F199)).